A 224-amino-acid polypeptide reads, in one-letter code: 7-cyano-7-deazaguanine synthase (224 aa).

Position 12-22 (12-22 (LSGGLDSSTVT)) interacts with ATP. Zn(2+)-binding residues include Cys-193, Cys-201, Cys-204, and Cys-207.

It belongs to the QueC family. Zn(2+) serves as cofactor.

The catalysed reaction is 7-carboxy-7-deazaguanine + NH4(+) + ATP = 7-cyano-7-deazaguanine + ADP + phosphate + H2O + H(+). The protein operates within purine metabolism; 7-cyano-7-deazaguanine biosynthesis. Functionally, catalyzes the ATP-dependent conversion of 7-carboxy-7-deazaguanine (CDG) to 7-cyano-7-deazaguanine (preQ(0)). The sequence is that of 7-cyano-7-deazaguanine synthase from Prochlorococcus marinus subsp. pastoris (strain CCMP1986 / NIES-2087 / MED4).